A 279-amino-acid polypeptide reads, in one-letter code: Large ribosomal subunit protein uL2 (279 aa).

Disordered stretches follow at residues 29–53 and 224–279; these read PEKS…TTRH and VAMN…KKRK. Over residues 253 to 268 the composition is skewed to basic and acidic residues; that stretch reads KEGRTRHPNKESDKLI. Over residues 269–279 the composition is skewed to basic residues; sequence VRRRNAGKKRK.

It belongs to the universal ribosomal protein uL2 family. Part of the 50S ribosomal subunit. Forms a bridge to the 30S subunit in the 70S ribosome.

Its function is as follows. One of the primary rRNA binding proteins. Required for association of the 30S and 50S subunits to form the 70S ribosome, for tRNA binding and peptide bond formation. It has been suggested to have peptidyltransferase activity; this is somewhat controversial. Makes several contacts with the 16S rRNA in the 70S ribosome. The sequence is that of Large ribosomal subunit protein uL2 from Leifsonia xyli subsp. xyli (strain CTCB07).